The chain runs to 292 residues: 4-hydroxy-tetrahydrodipicolinate synthase (292 aa).

Threonine 45 provides a ligand contact to pyruvate. The Proton donor/acceptor role is filled by tyrosine 133. The active-site Schiff-base intermediate with substrate is lysine 161. Isoleucine 203 contributes to the pyruvate binding site.

Belongs to the DapA family. Homotetramer; dimer of dimers.

It localises to the cytoplasm. The enzyme catalyses L-aspartate 4-semialdehyde + pyruvate = (2S,4S)-4-hydroxy-2,3,4,5-tetrahydrodipicolinate + H2O + H(+). The protein operates within amino-acid biosynthesis; L-lysine biosynthesis via DAP pathway; (S)-tetrahydrodipicolinate from L-aspartate: step 3/4. Functionally, catalyzes the condensation of (S)-aspartate-beta-semialdehyde [(S)-ASA] and pyruvate to 4-hydroxy-tetrahydrodipicolinate (HTPA). This chain is 4-hydroxy-tetrahydrodipicolinate synthase, found in Salmonella paratyphi A (strain AKU_12601).